The following is a 320-amino-acid chain: Malate dehydrogenase (320 aa).

NAD(+) is bound by residues 10–15 (GAGQIG) and Asp-34. The substrate site is built by Arg-83 and Arg-89. NAD(+) contacts are provided by residues Asn-96 and 119 to 121 (ITN). Asn-121 and Arg-152 together coordinate substrate. The active-site Proton acceptor is His-176.

Belongs to the LDH/MDH superfamily. MDH type 3 family.

The catalysed reaction is (S)-malate + NAD(+) = oxaloacetate + NADH + H(+). In terms of biological role, catalyzes the reversible oxidation of malate to oxaloacetate. In Jannaschia sp. (strain CCS1), this protein is Malate dehydrogenase.